The chain runs to 1298 residues: DNA repair protein rad-50 (1298 aa).

Residues arginine 13, asparagine 38, glycine 39, glycine 41, lysine 42, threonine 43, threonine 44, isoleucine 66, and glutamine 158 each coordinate ATP. Mg(2+) is bound at residue threonine 43. Glutamine 158 provides a ligand contact to Mg(2+). Coiled coils occupy residues 222–291 (ARQN…IRVE), 317–598 (EERA…QYRK), and 622–660 (AEEVSEKLENLRKRLKKARKDLAPLSAKSNLYDSYIEES). The Zinc-hook domain maps to 622–719 (AEEVSEKLEN…EEIIIVKAEG (98 aa)). 2 residues coordinate Zn(2+): cysteine 666 and cysteine 669. Coiled coils occupy residues 691–719 (LSFPTEQEELEKLVSKLEKEEIIIVKAEG) and 754–1092 (KNEK…KESI).

Belongs to the SMC family. RAD50 subfamily. Component of the MRN complex composed of two heterodimers rad-50 and mre-11 associated with a single nbs-1. Zn(2+) serves as cofactor.

The protein resides in the nucleus. It is found in the chromosome. The enzyme catalyses ATP + H2O = ADP + phosphate + H(+). Functionally, component of the MRN complex, which plays a central role in double-strand break (DSB) repair, DNA recombination, maintenance of telomere integrity and meiosis. The MRN complex is involved in the repair of DNA double-strand breaks (DSBs) via homologous recombination (HR), an error-free mechanism which primarily occurs during S and G2 phases. The complex (1) mediates the end resection of damaged DNA, which generates proper single-stranded DNA, a key initial steps in HR, and is (2) required for the recruitment of other repair factors and efficient activation of ATM and ATR upon DNA damage. The MRN complex possesses single-strand endonuclease activity and double-strand-specific 3'-5' exonuclease activity, which are provided by mre-11, to initiate end resection, which is required for single-strand invasion and recombination. Within the complex, rad-50 is both required to bind DNA ends and hold them in close proximity and regulate the activity of mre-11. Rad-50 provides an ATP-dependent control of mre-11 by positioning DNA ends into the mre-11 active site: ATP-binding induces a large structural change from an open form with accessible mre-11 nuclease sites into a closed form. The polypeptide is DNA repair protein rad-50 (rad-50) (Caenorhabditis elegans).